A 155-amino-acid chain; its full sequence is Protein SprT-like (155 aa).

In terms of domain architecture, SprT-like spans 7–145 (QRHMEEVSLQ…GSCGGKLIQT (139 aa)). A Zn(2+)-binding site is contributed by His67. Glu68 is an active-site residue. Position 71 (His71) interacts with Zn(2+).

This sequence belongs to the SprT family. The cofactor is Zn(2+).

It localises to the cytoplasm. The polypeptide is Protein SprT-like (Listeria monocytogenes serovar 1/2a (strain ATCC BAA-679 / EGD-e)).